The chain runs to 307 residues: Holliday junction branch migration complex subunit RuvB (307 aa).

Residues 1–167 (MKLQIKPPNT…FGVILNINYY (167 aa)) form a large ATPase domain (RuvB-L) region. ATP-binding residues include Ile-5, Gly-48, Lys-51, Thr-52, Thr-53, Arg-157, Tyr-167, and Arg-204. Thr-52 serves as a coordination point for Mg(2+). Residues 168–233 (SNAEIEKMVS…DLEGLFKNLM (66 aa)) are small ATPAse domain (RuvB-S). The tract at residues 236-307 (KNGLQSIDVQ…NSGREYLVNF (72 aa)) is head domain (RuvB-H). DNA-binding residues include Arg-270, Lys-289, and Arg-294.

It belongs to the RuvB family. Homohexamer. Forms an RuvA(8)-RuvB(12)-Holliday junction (HJ) complex. HJ DNA is sandwiched between 2 RuvA tetramers; dsDNA enters through RuvA and exits via RuvB. An RuvB hexamer assembles on each DNA strand where it exits the tetramer. Each RuvB hexamer is contacted by two RuvA subunits (via domain III) on 2 adjacent RuvB subunits; this complex drives branch migration. In the full resolvosome a probable DNA-RuvA(4)-RuvB(12)-RuvC(2) complex forms which resolves the HJ.

The protein resides in the cytoplasm. The enzyme catalyses ATP + H2O = ADP + phosphate + H(+). The RuvA-RuvB-RuvC complex processes Holliday junction (HJ) DNA during genetic recombination and DNA repair, while the RuvA-RuvB complex plays an important role in the rescue of blocked DNA replication forks via replication fork reversal (RFR). RuvA specifically binds to HJ cruciform DNA, conferring on it an open structure. The RuvB hexamer acts as an ATP-dependent pump, pulling dsDNA into and through the RuvAB complex. RuvB forms 2 homohexamers on either side of HJ DNA bound by 1 or 2 RuvA tetramers; 4 subunits per hexamer contact DNA at a time. Coordinated motions by a converter formed by DNA-disengaged RuvB subunits stimulates ATP hydrolysis and nucleotide exchange. Immobilization of the converter enables RuvB to convert the ATP-contained energy into a lever motion, pulling 2 nucleotides of DNA out of the RuvA tetramer per ATP hydrolyzed, thus driving DNA branch migration. The RuvB motors rotate together with the DNA substrate, which together with the progressing nucleotide cycle form the mechanistic basis for DNA recombination by continuous HJ branch migration. Branch migration allows RuvC to scan DNA until it finds its consensus sequence, where it cleaves and resolves cruciform DNA. This chain is Holliday junction branch migration complex subunit RuvB, found in Mycoplasma genitalium (strain ATCC 33530 / DSM 19775 / NCTC 10195 / G37) (Mycoplasmoides genitalium).